The chain runs to 1251 residues: Phospholipid-transporting ATPase IC (1251 aa).

The segment at 1-52 (MSTERDSETTFDEESQPNDEVVPYSDDETEDELEDQGSTVEPEQNRVNREAE) is disordered. The Cytoplasmic portion of the chain corresponds to 1-121 (MSTERDSETT…LFEQFKRAAN (121 aa)). The span at 25-35 (SDDETEDELED) shows a compositional bias: acidic residues. Basic and acidic residues predominate over residues 43 to 52 (EQNRVNREAE). A helical membrane pass occupies residues 122–142 (FYFLILLILQAIPQISTLAWY). Over 143-144 (TT) the chain is Exoplasmic loop. The chain crosses the membrane as a helical span at residues 145–165 (LVPLLLVLGITAIKDLVDDVA). Over 166-339 (RHKMDKEINN…RTKIDYLMNY (174 aa)) the chain is Cytoplasmic. A helical transmembrane segment spans residues 340–360 (MVYTIFIVLILVSAGLAIGHA). Residues 361 to 385 (YWEAQVGNYSWYLYDGENATPSYRG) are Exoplasmic loop-facing. The helical transmembrane segment at 386 to 406 (FLNFWGYIIVLNTMVPISLYV) threads the bilayer. Residues 407–952 (SVEVIRLGQS…SYIRMCKFLR (546 aa)) are Cytoplasmic-facing. Asp-454 (4-aspartylphosphate intermediate) is an active-site residue. ATP contacts are provided by Asp-454, Lys-455, Thr-456, Glu-555, Phe-596, Lys-619, Arg-652, Thr-732, Gly-733, Asp-734, Arg-867, and Lys-873. Position 454 (Asp-454) interacts with Mg(2+). Thr-456 serves as a coordination point for Mg(2+). Mg(2+) is bound at residue Asp-893. ATP is bound by residues Asn-896 and Asp-897. Residue Asp-897 coordinates Mg(2+). The helical transmembrane segment at 953–973 (YFFYKNFAFTLVHFWYSFFNG) threads the bilayer. Over 974 to 982 (YSAQTAYED) the chain is Exoplasmic loop. The helical transmembrane segment at 983–1003 (WFITLYNVLYSSLPVLLMGLL) threads the bilayer. Residues 1004–1032 (DQDVSDKLSLRFPGLYVVGQRDLLFNYKR) lie on the Cytoplasmic side of the membrane. A helical transmembrane segment spans residues 1033 to 1053 (FFVSLLHGVLTSMVLFFIPLG). Topologically, residues 1054–1071 (AYLQTVGQDGEAPSDYQS) are exoplasmic loop. A helical membrane pass occupies residues 1072–1092 (FAVTVASALVITVNFQIGLDT). Over 1093–1094 (SY) the chain is Cytoplasmic. The chain crosses the membrane as a helical span at residues 1095–1115 (WTFVNAFSIFGSIALYFGIMF). Over 1116 to 1142 (DFHSAGIHVLFPSAFQFTGTASNALRQ) the chain is Exoplasmic loop. A helical transmembrane segment spans residues 1143-1163 (PYIWLTIILTVAVCLLPVVAI). The Cytoplasmic segment spans residues 1164-1251 (RFLSMTIWPS…TAEYRRTVES (88 aa)). Residue Ser-1223 is modified to Phosphoserine.

This sequence belongs to the cation transport ATPase (P-type) (TC 3.A.3) family. Type IV subfamily. In terms of assembly, component of a P4-ATPase flippase complex which consists of a catalytic alpha subunit ATP8B1 and an accessory beta subunit TMEM30A. The flippase ATP8B1:TMEM30A complex can form an intermediate phosphoenzyme in vitro. Also interacts with beta subunit TMEM30B. Mg(2+) serves as cofactor. As to expression, hepatocytes, bile duct, intestinal epithelial cells (cholangiocytes and ileocytes), and pancreatic acinar cells.

Its subcellular location is the cell membrane. It is found in the apical cell membrane. The protein resides in the cell projection. It localises to the stereocilium. The protein localises to the endoplasmic reticulum. Its subcellular location is the golgi apparatus. The enzyme catalyses ATP + H2O + phospholipidSide 1 = ADP + phosphate + phospholipidSide 2.. The catalysed reaction is a 1,2-diacyl-sn-glycero-3-phosphocholine(out) + ATP + H2O = a 1,2-diacyl-sn-glycero-3-phosphocholine(in) + ADP + phosphate + H(+). It carries out the reaction a 1,2-diacyl-sn-glycero-3-phospho-L-serine(out) + ATP + H2O = a 1,2-diacyl-sn-glycero-3-phospho-L-serine(in) + ADP + phosphate + H(+). Catalytic component of a P4-ATPase flippase complex which catalyzes the hydrolysis of ATP coupled to the transport of phospholipids, in particular phosphatidylcholines (PC), from the outer to the inner leaflet of the plasma membrane. May participate in the establishment of the canalicular membrane integrity by ensuring asymmetric distribution of phospholipids in the canicular membrane. Thus may have a role in the regulation of bile acids transport into the canaliculus, uptake of bile acids from intestinal contents into intestinal mucosa or both and protect hepatocytes from bile salts. Involved in the microvillus formation in polarized epithelial cells; the function seems to be independent from its flippase activity. Participates in correct apical membrane localization of CDC42, CFTR and SLC10A2. Enables CDC42 clustering at the apical membrane during enterocyte polarization through the interaction between CDC42 polybasic region and negatively charged membrane lipids provided by ATP8B1. Together with TMEM30A is involved in uptake of the synthetic drug alkylphospholipid perifosine. Required for the preservation of cochlear hair cells in the inner ear. According PubMed:20852622 is proposed to act as cardiolipin transporter during inflammatory injury; the function is questioned by PubMed:21475228. The sequence is that of Phospholipid-transporting ATPase IC from Mus musculus (Mouse).